A 407-amino-acid chain; its full sequence is Arrestin homolog (407 aa).

It belongs to the arrestin family.

This Locusta migratoria (Migratory locust) protein is Arrestin homolog.